A 278-amino-acid polypeptide reads, in one-letter code: NAD kinase (278 aa).

Aspartate 67 (proton acceptor) is an active-site residue. NAD(+) is bound by residues 67–68 (DG), arginine 72, 137–138 (NE), lysine 148, arginine 165, aspartate 167, 178–183 (TGYALS), and glutamine 237.

This sequence belongs to the NAD kinase family. The cofactor is a divalent metal cation.

The protein localises to the cytoplasm. The enzyme catalyses NAD(+) + ATP = ADP + NADP(+) + H(+). Involved in the regulation of the intracellular balance of NAD and NADP, and is a key enzyme in the biosynthesis of NADP. Catalyzes specifically the phosphorylation on 2'-hydroxyl of the adenosine moiety of NAD to yield NADP. The polypeptide is NAD kinase (Thermococcus gammatolerans (strain DSM 15229 / JCM 11827 / EJ3)).